We begin with the raw amino-acid sequence, 245 residues long: 4-hydroxy-tetrahydrodipicolinate reductase (245 aa).

NAD(+) is bound by residues 7 to 12 (GAKGKV), Asp33, 75 to 77 (GTT), and 102 to 105 (APNF). His132 serves as the catalytic Proton donor/acceptor. Residue His133 coordinates (S)-2,3,4,5-tetrahydrodipicolinate. The active-site Proton donor is the Lys136. 142-143 (GT) serves as a coordination point for (S)-2,3,4,5-tetrahydrodipicolinate.

It belongs to the DapB family.

It is found in the cytoplasm. It carries out the reaction (S)-2,3,4,5-tetrahydrodipicolinate + NAD(+) + H2O = (2S,4S)-4-hydroxy-2,3,4,5-tetrahydrodipicolinate + NADH + H(+). The catalysed reaction is (S)-2,3,4,5-tetrahydrodipicolinate + NADP(+) + H2O = (2S,4S)-4-hydroxy-2,3,4,5-tetrahydrodipicolinate + NADPH + H(+). It participates in amino-acid biosynthesis; L-lysine biosynthesis via DAP pathway; (S)-tetrahydrodipicolinate from L-aspartate: step 4/4. Catalyzes the conversion of 4-hydroxy-tetrahydrodipicolinate (HTPA) to tetrahydrodipicolinate. The polypeptide is 4-hydroxy-tetrahydrodipicolinate reductase (Mycolicibacterium paratuberculosis (strain ATCC BAA-968 / K-10) (Mycobacterium paratuberculosis)).